Consider the following 277-residue polypeptide: Release factor glutamine methyltransferase (277 aa).

S-adenosyl-L-methionine is bound by residues Gly-117–Gly-121, Asp-140, Trp-168, and Asn-183. Asn-183–Tyr-186 contacts substrate.

This sequence belongs to the protein N5-glutamine methyltransferase family. PrmC subfamily.

The catalysed reaction is L-glutaminyl-[peptide chain release factor] + S-adenosyl-L-methionine = N(5)-methyl-L-glutaminyl-[peptide chain release factor] + S-adenosyl-L-homocysteine + H(+). Functionally, methylates the class 1 translation termination release factors RF1/PrfA and RF2/PrfB on the glutamine residue of the universally conserved GGQ motif. The protein is Release factor glutamine methyltransferase of Shigella dysenteriae serotype 1 (strain Sd197).